The chain runs to 215 residues: UPF0488 protein C8orf33 homolog (215 aa).

Disordered regions lie at residues 1–72 (MLED…DEQL), 87–111 (LRTQKTSSKQREEASRALKTLRSSK), and 158–199 (CKPV…DTKP). The segment covering 29–39 (AKKHKKKKKKK) has biased composition (basic residues). A compositionally biased stretch (basic and acidic residues) spans 40-63 (AGEGKDDQQRETKTTEGETAKQET). Basic and acidic residues-rich tracts occupy residues 167–178 (ERNTQPKNKTDG) and 188–199 (TNEHTKTEDTKP).

Belongs to the UPF0488 family.

This chain is UPF0488 protein C8orf33 homolog, found in Danio rerio (Zebrafish).